The chain runs to 136 residues: Histone H3 (136 aa).

The segment at 1–43 (MARTKQTARKSTGAKAPRKQLASKAARKSAPATGGIKKPHRFR) is disordered. N6,N6,N6-trimethyllysine; alternate occurs at positions 5 and 10. At lysine 5 the chain carries N6,N6-dimethyllysine; alternate. Residues lysine 5 and lysine 10 each carry the N6-acetyllysine; alternate modification. N6-methyllysine; alternate is present on lysine 5. Residue serine 11 is modified to Phosphoserine. N6-acetyllysine is present on residues lysine 15, lysine 19, and lysine 24. An N6,N6,N6-trimethyllysine; alternate mark is found at lysine 28 and lysine 37. 2 positions are modified to N6,N6-dimethyllysine; alternate: lysine 28 and lysine 37. N6-acetyllysine; alternate is present on residues lysine 28, lysine 37, and lysine 57. N6-methyllysine; alternate occurs at positions 28, 37, and 57. An N6-methyllysine modification is found at lysine 80.

Belongs to the histone H3 family. As to quaternary structure, the nucleosome is a histone octamer containing two molecules each of H2A, H2B, H3 and H4 assembled in one H3-H4 heterotetramer and two H2A-H2B heterodimers. The octamer wraps approximately 147 bp of DNA. Phosphorylated to form H3S10ph. H3S10ph promotes subsequent H3K14ac formation by GCN5. H3S10ph is only found in the mitotically dividing MIC, but not in the amitotically dividing MAC. H3S10ph is correlated with chromosome condensation during mitotic or meiotic micronuclear divisions. Post-translationally, acetylation of histone H3 leads to transcriptional activation. H3K14ac formation by GCN5 is promoted by H3S10ph. H3K9acK14ac is the preferred acetylated form of newly synthesized H3. Acetylation occurs almost exclusively in the MAC. In terms of processing, methylated to form H3K4me. H3K4me is only found in the transcriptionally active MAC. Methylated to form H3K9me in developing MACs during conjugation, when genome-wide DNA elimination occurs. At this stage, H3K9me specifically occurs on DNA sequences being eliminated (IES), probably targeted by small scan RNAs (scnRNAs) bound to IES, and is required for efficient IES elimination. H3K9me is required for the interaction with the chromodomains of PDD1 and PDD3. The full-length protein H3S (slow migrating) is converted to H3F (fast migrating) by proteolytic removal of the first 6 residues. H3F is unique to MIC, and processing seems to occur regularly each generation at a specific point in the cell cycle.

The protein localises to the nucleus. Its subcellular location is the chromosome. Core component of nucleosome. Nucleosomes wrap and compact DNA into chromatin, limiting DNA accessibility to the cellular machineries which require DNA as a template. Histones thereby play a central role in transcription regulation, DNA repair, DNA replication and chromosomal stability. DNA accessibility is regulated via a complex set of post-translational modifications of histones, also called histone code, and nucleosome remodeling. This is Histone H3 from Tetrahymena pyriformis.